Here is a 256-residue protein sequence, read N- to C-terminus: Thiazole synthase (256 aa).

Catalysis depends on Lys96, which acts as the Schiff-base intermediate with DXP. 1-deoxy-D-xylulose 5-phosphate contacts are provided by residues Gly157, Ala184–Gly185, and Asn206–Thr207.

Belongs to the ThiG family. Homotetramer. Forms heterodimers with either ThiH or ThiS.

Its subcellular location is the cytoplasm. It catalyses the reaction [ThiS sulfur-carrier protein]-C-terminal-Gly-aminoethanethioate + 2-iminoacetate + 1-deoxy-D-xylulose 5-phosphate = [ThiS sulfur-carrier protein]-C-terminal Gly-Gly + 2-[(2R,5Z)-2-carboxy-4-methylthiazol-5(2H)-ylidene]ethyl phosphate + 2 H2O + H(+). The protein operates within cofactor biosynthesis; thiamine diphosphate biosynthesis. In terms of biological role, catalyzes the rearrangement of 1-deoxy-D-xylulose 5-phosphate (DXP) to produce the thiazole phosphate moiety of thiamine. Sulfur is provided by the thiocarboxylate moiety of the carrier protein ThiS. In vitro, sulfur can be provided by H(2)S. This chain is Thiazole synthase, found in Roseobacter denitrificans (strain ATCC 33942 / OCh 114) (Erythrobacter sp. (strain OCh 114)).